Here is a 99-residue protein sequence, read N- to C-terminus: DNA-binding protein Fis (99 aa).

Positions 75–94 form a DNA-binding region, H-T-H motif; the sequence is QTRAANMLGINRGTLRKKLK.

This sequence belongs to the transcriptional regulatory Fis family. As to quaternary structure, homodimer.

Functionally, activates ribosomal RNA transcription. Plays a direct role in upstream activation of rRNA promoters. The polypeptide is DNA-binding protein Fis (Haemophilus influenzae (strain 86-028NP)).